A 338-amino-acid chain; its full sequence is Lipoate-protein ligase A (338 aa).

Positions 29–216 (PATQRVLFLW…AFFAHYGERV (188 aa)) constitute a BPL/LPL catalytic domain. ATP-binding positions include Arg71, 76-79 (GAVF), and Lys134. Lys134 serves as a coordination point for (R)-lipoate.

It belongs to the LplA family. Monomer.

The protein resides in the cytoplasm. The enzyme catalyses L-lysyl-[lipoyl-carrier protein] + (R)-lipoate + ATP = N(6)-[(R)-lipoyl]-L-lysyl-[lipoyl-carrier protein] + AMP + diphosphate + H(+). Its pathway is protein modification; protein lipoylation via exogenous pathway; protein N(6)-(lipoyl)lysine from lipoate: step 1/2. It participates in protein modification; protein lipoylation via exogenous pathway; protein N(6)-(lipoyl)lysine from lipoate: step 2/2. Catalyzes both the ATP-dependent activation of exogenously supplied lipoate to lipoyl-AMP and the transfer of the activated lipoyl onto the lipoyl domains of lipoate-dependent enzymes. This is Lipoate-protein ligase A from Escherichia coli O6:H1 (strain CFT073 / ATCC 700928 / UPEC).